We begin with the raw amino-acid sequence, 467 residues long: Cysteine--tRNA ligase (467 aa).

Residue Cys29 participates in Zn(2+) binding. The 'HIGH' region motif lies at 31 to 41 (PTVYDDSHLGH). The disordered stretch occupies residues 155–174 (KLSGRGEDLEQVSRIESSEE). Basic and acidic residues predominate over residues 158 to 174 (GRGEDLEQVSRIESSEE). Zn(2+)-binding residues include Cys210, His239, and Glu243. The 'KMSKS' region motif lies at 271–275 (KMSKS). Lys274 serves as a coordination point for ATP.

This sequence belongs to the class-I aminoacyl-tRNA synthetase family. As to quaternary structure, monomer. Zn(2+) is required as a cofactor.

The protein localises to the cytoplasm. The catalysed reaction is tRNA(Cys) + L-cysteine + ATP = L-cysteinyl-tRNA(Cys) + AMP + diphosphate. This chain is Cysteine--tRNA ligase, found in Wolinella succinogenes (strain ATCC 29543 / DSM 1740 / CCUG 13145 / JCM 31913 / LMG 7466 / NCTC 11488 / FDC 602W) (Vibrio succinogenes).